A 133-amino-acid polypeptide reads, in one-letter code: Small ribosomal subunit protein uS11 (133 aa).

Belongs to the universal ribosomal protein uS11 family. In terms of assembly, part of the 30S ribosomal subunit. Interacts with proteins S7 and S18. Binds to IF-3.

In terms of biological role, located on the platform of the 30S subunit, it bridges several disparate RNA helices of the 16S rRNA. Forms part of the Shine-Dalgarno cleft in the 70S ribosome. The polypeptide is Small ribosomal subunit protein uS11 (Burkholderia pseudomallei (strain 1106a)).